A 502-amino-acid polypeptide reads, in one-letter code: Cyanidin 3-O-glucoside 5-O-glucosyltransferase (acyl-glucose) (502 aa).

An N-terminal signal peptide occupies residues 1–30 (MNMSCKFEIVLLVSWWLLLVLVFGVESSMF). Asn-2 carries an N-linked (GlcNAc...) asparagine glycan. A beta-D-glucoside-binding positions include Gln-52, His-150, and 196–197 (NE). The Proton donor role is filled by Glu-197. Asn-303 is a glycosylation site (N-linked (GlcNAc...) asparagine). The a beta-D-glucoside site is built by Tyr-320 and Glu-388. The active-site Nucleophile is Glu-388. Asn-425 is a glycosylation site (N-linked (GlcNAc...) asparagine). A beta-D-glucoside is bound by residues Trp-435 and Phe-451.

This sequence belongs to the glycosyl hydrolase 1 family. As to expression, expressed in petals.

The protein localises to the vacuole. The enzyme catalyses cyanidin 3-O-beta-D-glucoside + 1-O-(trans-sinapoyl)-beta-D-glucose = cyanidin 3,5-di-O-beta-D-glucoside + (E)-sinapate. It functions in the pathway pigment biosynthesis; anthocyanin biosynthesis. Its function is as follows. Beta-glycosidase that catalyzes the transfer of glucose moiety to anthocyanidin 3-glucoside at the 5 position. Anthocyanins are ubiquitous colored pigments that are responsible for variations in petal color. Uses acyl-glucoses, but not UDP-glucose, as the glucose donor. This Dianthus caryophyllus (Carnation) protein is Cyanidin 3-O-glucoside 5-O-glucosyltransferase (acyl-glucose) (AA5GT).